A 162-amino-acid chain; its full sequence is ATP synthase subunit b (162 aa).

Residues 4-24 (INWGSIIYQLIAFCVLLWLLS) form a helical membrane-spanning segment.

Belongs to the ATPase B chain family. In terms of assembly, F-type ATPases have 2 components, F(1) - the catalytic core - and F(0) - the membrane proton channel. F(1) has five subunits: alpha(3), beta(3), gamma(1), delta(1), epsilon(1). F(0) has three main subunits: a(1), b(2) and c(10-14). The alpha and beta chains form an alternating ring which encloses part of the gamma chain. F(1) is attached to F(0) by a central stalk formed by the gamma and epsilon chains, while a peripheral stalk is formed by the delta and b chains.

The protein resides in the cell membrane. Its function is as follows. F(1)F(0) ATP synthase produces ATP from ADP in the presence of a proton or sodium gradient. F-type ATPases consist of two structural domains, F(1) containing the extramembraneous catalytic core and F(0) containing the membrane proton channel, linked together by a central stalk and a peripheral stalk. During catalysis, ATP synthesis in the catalytic domain of F(1) is coupled via a rotary mechanism of the central stalk subunits to proton translocation. Component of the F(0) channel, it forms part of the peripheral stalk, linking F(1) to F(0). This is ATP synthase subunit b from Halalkalibacterium halodurans (strain ATCC BAA-125 / DSM 18197 / FERM 7344 / JCM 9153 / C-125) (Bacillus halodurans).